Here is a 179-residue protein sequence, read N- to C-terminus: ADP-ribosylation factor-like protein 5A (179 aa).

A lipid anchor (N-myristoyl glycine) is attached at Gly2. GTP contacts are provided by residues 23 to 30 (GLDNAGKT), 66 to 70 (DIGGQ), 125 to 128 (NKQD), and Ala159.

It belongs to the small GTPase superfamily. Arf family.

Lacks ADP-ribosylation enhancing activity. This is ADP-ribosylation factor-like protein 5A (Arl5a) from Mus musculus (Mouse).